The following is a 357-amino-acid chain: Low-salt glycan biosynthesis nucleotidyltransferase Agl11 (357 aa).

Mg(2+) is bound by residues Asp-108 and Asp-221.

Belongs to the glucose-1-phosphate thymidylyltransferase family. Requires Mg(2+) as cofactor.

It functions in the pathway protein modification; protein glycosylation. Its pathway is cell surface structure biogenesis; S-layer biogenesis. Functionally, nucleotidyltransferase involved in N-glycan biosynthetic pathway that takes place under low-salt conditions (1.75 M instead of 3.4 M). Participates in the formation of the tetrasaccharide present at 'Asn-532' of S-layer glycoprotein Csg, consisting of a sulfated hexose, 2 hexoses and rhamnose. Involved in the addition of final rhamnose (sugar 4) of the tetrasaccharide on the dolichol phosphate carrier. In Haloferax volcanii (strain ATCC 29605 / DSM 3757 / JCM 8879 / NBRC 14742 / NCIMB 2012 / VKM B-1768 / DS2) (Halobacterium volcanii), this protein is Low-salt glycan biosynthesis nucleotidyltransferase Agl11 (agl11).